A 316-amino-acid chain; its full sequence is Geminin coiled-coil domain-containing protein 1 (316 aa).

Positions 82 to 117 (QISANKQLQDTLLQKEEELSRLHEENNKLKEFLNSA) form a coiled coil. Composition is skewed to polar residues over residues 134–155 (GQSS…STPG) and 207–234 (MSLQ…QAAT). Disordered regions lie at residues 134 to 160 (GQSS…KAKR) and 207 to 269 (MSLQ…DVAP). Thr-153 is subject to Phosphothreonine; by cdk2. Residues 235-252 (SCSLSPSQCSSASLPESE) are compositionally biased toward low complexity. Residues 253–262 (TASPLSSPTY) are compositionally biased toward polar residues.

The protein belongs to the GEMC1 family. In terms of assembly, interacts with topbp1. Interacts with Cdc45l and the kinase cdk2-cyclin-E (the interaction is direct). In terms of processing, highly phosphorylated by cdk2; stimulates initiation of DNA replication. Expressed in most tissues. Enriched in proliferating cells from skin and gut.

The protein localises to the nucleus. Its function is as follows. Regulator of DNA replication. Promotes initiation of chromosomal DNA replication by mediating topbp1- and cdk2-dependent recruitment of cdc45l onto replication origins. In Xenopus laevis (African clawed frog), this protein is Geminin coiled-coil domain-containing protein 1 (gmnc).